Here is a 172-residue protein sequence, read N- to C-terminus: 3-phenylpropionate/cinnamic acid dioxygenase subunit beta (172 aa).

It belongs to the bacterial ring-hydroxylating dioxygenase beta subunit family. This dioxygenase system consists of four proteins: the two subunits of the hydroxylase component (HcaE and HcaF), a ferredoxin (HcaC) and a ferredoxin reductase (HcaD).

The enzyme catalyses 3-phenylpropanoate + NADH + O2 + H(+) = 3-(cis-5,6-dihydroxycyclohexa-1,3-dien-1-yl)propanoate + NAD(+). It catalyses the reaction (E)-cinnamate + NADH + O2 + H(+) = (2E)-3-(cis-5,6-dihydroxycyclohexa-1,3-dien-1-yl)prop-2-enoate + NAD(+). The protein operates within aromatic compound metabolism; 3-phenylpropanoate degradation. In terms of biological role, part of the multicomponent 3-phenylpropionate dioxygenase. Converts 3-phenylpropionic acid (PP) and cinnamic acid (CI) into 3-phenylpropionate-dihydrodiol (PP-dihydrodiol) and cinnamic acid-dihydrodiol (CI-dihydrodiol), respectively. This is 3-phenylpropionate/cinnamic acid dioxygenase subunit beta from Escherichia coli O139:H28 (strain E24377A / ETEC).